The following is a 256-amino-acid chain: 5-keto-4-deoxy-D-glucarate aldolase (256 aa).

Residue His-50 is the Proton acceptor of the active site. Gln-151 provides a ligand contact to substrate. Position 153 (Glu-153) interacts with Mg(2+). Ser-178 and Asp-179 together coordinate substrate. Residue Asp-179 participates in Mg(2+) binding.

The protein belongs to the HpcH/HpaI aldolase family. KDGluc aldolase subfamily. In terms of assembly, homohexamer; trimer of dimers. Requires Mg(2+) as cofactor.

The catalysed reaction is 5-dehydro-4-deoxy-D-glucarate = 2-hydroxy-3-oxopropanoate + pyruvate. The enzyme catalyses 2-dehydro-3-deoxy-D-glucarate = 2-hydroxy-3-oxopropanoate + pyruvate. The protein operates within carbohydrate acid metabolism; galactarate degradation; D-glycerate from galactarate: step 2/3. Functionally, catalyzes the reversible retro-aldol cleavage of both 5-keto-4-deoxy-D-glucarate and 2-keto-3-deoxy-D-glucarate to pyruvate and tartronic semialdehyde. This is 5-keto-4-deoxy-D-glucarate aldolase from Salmonella gallinarum (strain 287/91 / NCTC 13346).